Reading from the N-terminus, the 629-residue chain is Endoglucanase 15 (629 aa).

A signal peptide spans 1–30; that stretch reads MAKNGGAHGAATLFGLLALASMVKLGFVAG. The Nucleophile role is filled by D87. Residues H421, D473, and E482 contribute to the active site. Residues N520, N540, and N561 are each glycosylated (N-linked (GlcNAc...) asparagine).

It belongs to the glycosyl hydrolase 9 (cellulase E) family.

The protein resides in the secreted. It catalyses the reaction Endohydrolysis of (1-&gt;4)-beta-D-glucosidic linkages in cellulose, lichenin and cereal beta-D-glucans.. The sequence is that of Endoglucanase 15 from Oryza sativa subsp. japonica (Rice).